The primary structure comprises 373 residues: STE20-related kinase adapter protein alpha (373 aa).

Residues Tyr-11–Phe-321 enclose the Protein kinase domain. The segment covering Ser-255–Ser-281 has biased composition (polar residues). A disordered region spans residues Ser-255–Arg-288. The residue at position 361 (Thr-361) is a Phosphothreonine; by LKB1.

It belongs to the protein kinase superfamily. STE Ser/Thr protein kinase family. STE20 subfamily. Component of a trimeric complex composed of STK11/LKB1, STRAD (STRADA or STRADB) and CAB39/MO25 (CAB39/MO25alpha or CAB39L/MO25beta): the complex tethers STK11/LKB1 in the cytoplasm and stimulates its catalytic activity.

It is found in the nucleus. The protein localises to the cytoplasm. Its function is as follows. Pseudokinase which, in complex with CAB39/MO25 (CAB39/MO25alpha or CAB39L/MO25beta), binds to and activates STK11/LKB1. Adopts a closed conformation typical of active protein kinases and binds STK11/LKB1 as a pseudosubstrate, promoting conformational change of STK11/LKB1 in an active conformation. This Bos taurus (Bovine) protein is STE20-related kinase adapter protein alpha (STRADA).